The chain runs to 186 residues: Sec-independent protein translocase protein TatB (186 aa).

The chain crosses the membrane as a helical span at residues 1-21 (MFDIGFSELILLMVLGLVVLG). The tract at residues 120-186 (NAEKSQNAIS…SKSQSSKTKS (67 aa)) is disordered. Residues 177 to 186 (SKSQSSKTKS) show a composition bias toward polar residues.

It belongs to the TatB family. The Tat system comprises two distinct complexes: a TatABC complex, containing multiple copies of TatA, TatB and TatC subunits, and a separate TatA complex, containing only TatA subunits. Substrates initially bind to the TatABC complex, which probably triggers association of the separate TatA complex to form the active translocon.

The protein resides in the cell inner membrane. Its function is as follows. Part of the twin-arginine translocation (Tat) system that transports large folded proteins containing a characteristic twin-arginine motif in their signal peptide across membranes. Together with TatC, TatB is part of a receptor directly interacting with Tat signal peptides. TatB may form an oligomeric binding site that transiently accommodates folded Tat precursor proteins before their translocation. The chain is Sec-independent protein translocase protein TatB from Haemophilus influenzae (strain ATCC 51907 / DSM 11121 / KW20 / Rd).